We begin with the raw amino-acid sequence, 561 residues long: Transmembrane protein 209 (561 aa).

Phosphoserine is present on residues Ser-9 and Ser-11. Residues 28–48 traverse the membrane as a helical segment; sequence VVLAWGLLNVSMAGMIYTEMT. N-linked (GlcNAc...) asparagine glycosylation is present at Asn-57. Residues 60–80 form a helical membrane-spanning segment; the sequence is YWPLWYIELALASLFSLNALF. Ser-98 is modified (phosphoserine). Disordered regions lie at residues 119–157 and 195–234; these read DLAA…FTTS and FSPS…DKED. The span at 133–157 shows a compositional bias: low complexity; that stretch reads SIQGQSVLSYSPSRSPSTSPKFTTS. Phosphoserine occurs at positions 201, 222, and 248. Positions 220-229 are enriched in polar residues; it reads RSSPTVYNSP. Positions 250 to 271 are disordered; it reads EEKQHRVKLGSPDSTSPSSSPT. The span at 260–271 shows a compositional bias: low complexity; that stretch reads SPDSTSPSSSPT. An N-linked (GlcNAc...) asparagine glycan is attached at Asn-274. Ser-278 bears the Phosphoserine mark.

As to quaternary structure, interacts with NUP205. Expressed in the testis.

It localises to the membrane. It is found in the nucleus envelope. The protein localises to the golgi apparatus. Its subcellular location is the cytoplasm. Functionally, nuclear envelope protein which in association with NUP205, may be involved in nuclear transport of various nuclear proteins in addition to MYC. The protein is Transmembrane protein 209 (TMEM209) of Homo sapiens (Human).